The sequence spans 4540 residues: Dynein heavy chain, cytoplasmic (4540 aa).

Positions 1-1796 (MEESETQLNV…LIQMGNAQFH (1796 aa)) are stem. Coiled-coil stretches lie at residues 440–482 (EHIK…NVQQ), 698–722 (RVNY…KTKV), 794–827 (VKKF…AMKT), 975–995 (QQLI…MEQY), 1169–1251 (RSKK…LKMD), and 1295–1311 (QNKK…KQLN). 4 AAA regions span residues 1797–2018 (YGFE…VLNS), 2091–2348 (KELA…FTRI), 2457–2705 (EIDP…WKYA), and 2796–3056 (QFNE…AKRF). ATP is bound by residues 1835 to 1842 (GPAGTGKT), 2129 to 2136 (GPCGCGKS), 2496 to 2503 (GPPGSGKT), and 2834 to 2841 (GSSGVGKT). Coiled coils occupy residues 3076–3182 (NEKK…NAKQ), 3289–3367 (QLKY…RSQA), 3653–3688 (EDEK…VMNT), and 3820–3851 (QQLK…RWLN). The segment at 3076 to 3367 (NEKKSQLEDQ…VQEKVTRSQA (292 aa)) is stalk. Residues 3140–3159 (KKKEDSTRLSSDAEKKAKEM) form a disordered region. Residues 3444-3673 (LSRPSDRLNW…LKKEAAVIVQ (230 aa)) are AAA 5. Positions 3908–4123 (ARKLINQILG…QRCSLDLIDE (216 aa)) are AAA 6. 2 coiled-coil regions span residues 4238 to 4259 (QKLI…TQIE) and 4313 to 4342 (RFLD…LAQG).

Belongs to the dynein heavy chain family. As to quaternary structure, consists of at least two heavy chains and a number of intermediate and light chains.

The protein localises to the cytoplasm. It localises to the cytoskeleton. Its function is as follows. Cytoplasmic dynein acts as a motor for the intracellular retrograde motility of vesicles and organelles along microtubules. Dynein has ATPase activity; the force-producing power stroke is thought to occur on release of ADP. The polypeptide is Dynein heavy chain, cytoplasmic (DHC-8) (Paramecium tetraurelia).